The primary structure comprises 477 residues: UDP-N-acetylmuramate--L-alanine ligase (477 aa).

122–128 (GTHGKTT) contributes to the ATP binding site.

It belongs to the MurCDEF family.

Its subcellular location is the cytoplasm. It carries out the reaction UDP-N-acetyl-alpha-D-muramate + L-alanine + ATP = UDP-N-acetyl-alpha-D-muramoyl-L-alanine + ADP + phosphate + H(+). It participates in cell wall biogenesis; peptidoglycan biosynthesis. Its function is as follows. Cell wall formation. In Xylella fastidiosa (strain M23), this protein is UDP-N-acetylmuramate--L-alanine ligase.